A 144-amino-acid polypeptide reads, in one-letter code: Transcription antitermination protein NusB (144 aa).

Belongs to the NusB family.

In terms of biological role, involved in transcription antitermination. Required for transcription of ribosomal RNA (rRNA) genes. Binds specifically to the boxA antiterminator sequence of the ribosomal RNA (rrn) operons. The chain is Transcription antitermination protein NusB from Histophilus somni (strain 2336) (Haemophilus somnus).